We begin with the raw amino-acid sequence, 459 residues long: tRNA modification GTPase MnmE (459 aa).

(6S)-5-formyl-5,6,7,8-tetrahydrofolate contacts are provided by Arg-22, Glu-87, and Arg-126. Residues 221-381 (GINVAICGKP…LEESIEKAVL (161 aa)) enclose the TrmE-type G domain. Asn-231 contributes to the K(+) binding site. GTP is bound by residues 231–236 (NVGKSS), 250–256 (TSIPGTT), and 275–278 (DTAG). Ser-235 provides a ligand contact to Mg(2+). Residues Thr-250, Ile-252, and Thr-255 each contribute to the K(+) site. Thr-256 serves as a coordination point for Mg(2+). Lys-459 is a binding site for (6S)-5-formyl-5,6,7,8-tetrahydrofolate.

It belongs to the TRAFAC class TrmE-Era-EngA-EngB-Septin-like GTPase superfamily. TrmE GTPase family. As to quaternary structure, homodimer. Heterotetramer of two MnmE and two MnmG subunits. K(+) serves as cofactor.

The protein resides in the cytoplasm. Its function is as follows. Exhibits a very high intrinsic GTPase hydrolysis rate. Involved in the addition of a carboxymethylaminomethyl (cmnm) group at the wobble position (U34) of certain tRNAs, forming tRNA-cmnm(5)s(2)U34. The protein is tRNA modification GTPase MnmE of Syntrophomonas wolfei subsp. wolfei (strain DSM 2245B / Goettingen).